Here is a 440-residue protein sequence, read N- to C-terminus: Adenylyltransferase and sulfurtransferase UBA4 (440 aa).

An N-acetylmethionine modification is found at Met-1. ATP contacts are provided by residues Gly-77, Asp-98, Ser-105–Arg-109, Lys-122, and Asp-166–Ser-167. Cys-208 and Cys-211 together coordinate Zn(2+). Residue Cys-225 is the Glycyl thioester intermediate; for adenylyltransferase activity of the active site. Zn(2+)-binding residues include Cys-286 and Cys-289. Ser-326 bears the Phosphoserine mark. The Rhodanese domain occupies Phe-339–Pro-438. Residue Cys-397 is the Cysteine persulfide intermediate; for sulfurtransferase activity of the active site.

The protein in the N-terminal section; belongs to the HesA/MoeB/ThiF family. UBA4 subfamily. It depends on Zn(2+) as a cofactor.

The protein resides in the cytoplasm. It is found in the cytosol. It participates in tRNA modification; 5-methoxycarbonylmethyl-2-thiouridine-tRNA biosynthesis. In terms of biological role, plays a central role in 2-thiolation of mcm(5)S(2)U at tRNA wobble positions of cytosolic tRNA(Lys), tRNA(Glu) and tRNA(Gln). Acts by mediating the C-terminal thiocarboxylation of sulfur carrier URM1. Its N-terminus first activates URM1 as acyl-adenylate (-COAMP), then the persulfide sulfur on the catalytic cysteine is transferred to URM1 to form thiocarboxylation (-COSH) of its C-terminus. The reaction probably involves hydrogen sulfide that is generated from the persulfide intermediate and that acts as a nucleophile towards URM1. Subsequently, a transient disulfide bond is formed. Does not use thiosulfate as sulfur donor; NFS1 probably acting as a sulfur donor for thiocarboxylation reactions. Prior mcm(5) tRNA modification by the elongator complex is required for 2-thiolation. May also be involved in protein urmylation. The chain is Adenylyltransferase and sulfurtransferase UBA4 from Saccharomyces cerevisiae (strain YJM789) (Baker's yeast).